The following is a 270-amino-acid chain: tRNA pseudouridine synthase A (270 aa).

The active-site Nucleophile is the Asp-60. The tract at residues 107-111 is RNA binding; the sequence is FHARF. Tyr-118 contacts substrate. An interaction with tRNA region spans residues 168-172; the sequence is QCQSR.

Belongs to the tRNA pseudouridine synthase TruA family. In terms of assembly, homodimer.

It carries out the reaction uridine(38/39/40) in tRNA = pseudouridine(38/39/40) in tRNA. Formation of pseudouridine at positions 38, 39 and 40 in the anticodon stem and loop of transfer RNAs. This is tRNA pseudouridine synthase A from Shigella boydii serotype 4 (strain Sb227).